The chain runs to 257 residues: Protein CUSTOS (257 aa).

Positions 1–11 (MSDLESSSSSS) are enriched in low complexity. A disordered region spans residues 1-72 (MSDLESSSSS…HEQDGNELQT (72 aa)). Residues 32–41 (QRPRGPEKPG) are compositionally biased toward basic and acidic residues. Ser-55 is subject to Phosphoserine. Thr-73 carries the post-translational modification Phosphothreonine. Disordered regions lie at residues 120–157 (FTSIPGGPEKEAAPQPCRKRLPSSSSSDDGDEELRRCR) and 170–257 (SAIH…VPSN). 2 stretches are compositionally biased toward basic residues: residues 180–190 (KKKKRKLKKKA) and 227–237 (TKKKKRKKKTK). The short motif at 228 to 236 (KKKKRKKKT) is the Nucleolar localization signal (NLS) element.

It belongs to the CUSTOS family.

It localises to the nucleus envelope. Functionally, plays a role in the regulation of Wnt signaling pathway during early development. The chain is Protein CUSTOS from Bos taurus (Bovine).